Consider the following 591-residue polypeptide: Acyl-CoA-dependent acyltransferase MAC1 (591 aa).

Positions 589-591 (ARL) are peroxisomal targeting signal type 1.

The protein belongs to the trichothecene O-acetyltransferase family.

It is found in the peroxisome. It functions in the pathway secondary metabolite biosynthesis. In terms of biological role, acyl-CoA-dependent acyltransferase; part of the gene cluster that mediates the biosynthesis of mannosylerythritol lipids (MELs), surface-active substances that enhance the availability of water-insoluble substrates. Mannosylerythritol lipid production is responsible for hemolytic activity of Ustilago maydis. Depending on the number of acetyl groups, mannosylerythritol lipids can be differentiated into MEL A (fully acetylated), MEL B and MEL C (monoacetylated at R-6 and R-4, respectively), and the fully deacetylated MEL D. The first step in the pathway is the generation of mannosylerythritol by the glycosyltransferase EMT1 which catalyzes the transfer of GDP-mannose to the C-4 atom of meso-erythritol. This reaction has to be stereospecific, since only mannosyl-D-erythritol is generated. The produced disaccharide is subsequently acylated with fatty acids of various lengths derived from the peroxisomal beta-oxidation by the peroxisomal acyltransferases MAC1 and MAC2 at positions C-2 and C-3, repectively. The existence of MEL derivatives which carry an acetyl group at C-2 implies that at least MAC1 also accepts acetyl-CoA as a donor. The final step of MEL biosynthesis is the acetylation of the fully acylated mannosylerythritol lipids catalyzed by the acetyl-CoA-dependent acetyltransferase MAT1. MAT1 displays a relaxed regioselectivity and is able to transfer acetylgroups to both positions C-4 and C-6 of the mannosyl moiety. The polypeptide is Acyl-CoA-dependent acyltransferase MAC1 (Mycosarcoma maydis (Corn smut fungus)).